The sequence spans 284 residues: Zinc finger protein ZAT3 (284 aa).

Positions M1–F12 are enriched in basic and acidic residues. Residues M1–T76 form a disordered region. Positions P18–D37 are enriched in polar residues. The span at T47–P62 shows a compositional bias: low complexity. 3 consecutive C2H2-type zinc fingers follow at residues R77 to H99, F162 to H184, and H222 to H244.

In terms of assembly, interacts (via the EAR motif) with TPL. Expressed exclusively in pollen.

It localises to the nucleus. Mediates the regulation of male germ cell division by DUO1. The sequence is that of Zinc finger protein ZAT3 from Arabidopsis thaliana (Mouse-ear cress).